A 230-amino-acid polypeptide reads, in one-letter code: MKITWLGHSGFRIAIEQAVLLVDPWLTGNPLFPADRREEALAGATHILITHGHGDHTGDTVAIAKERGLPVVGIYDLVTWLQEKEGIDGIGFNKGGTVTLGGARVTMVQATHSSSMSGEAGPIYTGTESGYMIAGEGHVIYLSGDTDIMADMGWMGEYHRPDVGILSAGGHFTMDMKRAAFAARKYFDFRTVIPCHYRTFPLLEQSAEALKEGLPGVEVIEPQVLVPIEI.

It belongs to the UPF0173 family.

This is UPF0173 metal-dependent hydrolase RSKD131_0588 from Cereibacter sphaeroides (strain KD131 / KCTC 12085) (Rhodobacter sphaeroides).